The chain runs to 269 residues: Phosphate import ATP-binding protein PstB 1 (269 aa).

The 240-residue stretch at Phe-16 to Pro-255 folds into the ABC transporter domain. Gly-48–Ser-55 contacts ATP.

Belongs to the ABC transporter superfamily. Phosphate importer (TC 3.A.1.7) family. In terms of assembly, the complex is composed of two ATP-binding proteins (PstB), two transmembrane proteins (PstC and PstA) and a solute-binding protein (PstS).

It localises to the cell inner membrane. The catalysed reaction is phosphate(out) + ATP + H2O = ADP + 2 phosphate(in) + H(+). Part of the ABC transporter complex PstSACB involved in phosphate import. Responsible for energy coupling to the transport system. The polypeptide is Phosphate import ATP-binding protein PstB 1 (Synechocystis sp. (strain ATCC 27184 / PCC 6803 / Kazusa)).